Here is a 245-residue protein sequence, read N- to C-terminus: Neurovirulence factor ICP34.5 (245 aa).

A compositionally biased stretch (basic residues) spans 1-15; that stretch reads MARRRRRHRGPRRPR. A required for nucleolar localization region spans residues 1 to 17; sequence MARRRRRHRGPRRPRPP. 2 disordered regions span residues 1 to 122 and 143 to 172; these read MARR…PFRL and RRAG…PATP. Polar residues predominate over residues 25 to 36; sequence TAQSQVTSTPNS. Over residues 67 to 77 the composition is skewed to acidic residues; it reads ASDDDDDDDWP. 2 stretches are compositionally biased toward pro residues: residues 78–87 and 113–122; these read DSPPPEPAPE and SHPPSRPFRL. The short motif at 122–131 is the Nuclear export signal element; sequence LPPRLALRLR. 6 repeat units span residues 155-157, 158-160, 161-163, 164-166, 167-169, and 170-172. A 6 X 3 AA tandem repeats of A-T-P region spans residues 155–172; the sequence is ATPATPATPATPATPATP. A compositionally biased stretch (low complexity) spans 158–172; that stretch reads ATPATPATPATPATP. The segment at 172–185 is binding to PP1CA; the sequence is PARVRFSPHVRVRH. Positions 172-185 are interaction with host PPP1CA; the sequence is PARVRFSPHVRVRH. The segment at 187 to 245 is important for interferon resistance; it reads VVWASAARLARRGSWARERADRARFRRRVAEAEAVIGPCLGPEARARALARGAGPANSV. Residues 197-215 carry the Bipartite nuclear localization signal motif; it reads RRGSWARERADRARFRRRV. The interaction with host EIF2S1/EIF-2ALPHA stretch occupies residues 215–230; sequence VAEAEAVIGPCLGPEA.

It belongs to the PPP1R15 family. As to quaternary structure, interacts with host PPP1CA to form a high-molecular-weight complex that dephosphorylates EIF2S1/eIF-2alpha. Interacts with host EIF2S1/eIF-2alpha; this interaction is crucial for the specific dephosphorylation of EIF2S1/eIF-2alpha by PPP1CA. Binds to proliferating cell nuclear antigen (PCNA), which may release host cells from growth arrest and facilitate viral replication. Interacts (via N-terminus) with host C1QBP and PRKCA. Interacts with protein UL31. Interacts with host TBK1. Interacts with host STING/TMEM173; this interaction inhibits the intracellular DNA sensing pathway. Interacts with host BECN1; this interaction modulates host autophagy.

The protein resides in the host cytoplasm. It is found in the host nucleus. Its subcellular location is the host nucleolus. It localises to the virion. Its function is as follows. Inhibits the establishment of the immune response and of the integrated stress response (ISR) in the infected cell. Plays essential roles in viral nuclear egress to mediate capsid transit across the nuclear membrane. Facilitates nuclear egress cooperatively with host C1QBP and protein kinase C/PKC to induce lamin A/C phosphorylation and subsequent reorganization. In turn, lamina disassembles and nuclear egress occurs. Recruits the serine/threonine protein phosphatase PPP1CA/PP1-alpha to dephosphorylate the translation initiation factor EIF2S1/eIF-2alpha, thereby couteracting the host shutoff of protein synthesis involving double-stranded RNA-dependent protein kinase EIF2AK2/PKR. In turn, controls host IRF3 activation and subsequently inhibits host interferon response. Controls the DNA sensing pathway by interacting with and inhibiting host STING/TMEM173. Also down-modulates the host MHC class II proteins cell surface expression. Acts as a neurovirulence factor that has a profound effect on the growth of the virus in central nervous system tissue, by interacting with host BECN1 and thereby antagonizing the host autophagy response. This is Neurovirulence factor ICP34.5 (RL1) from Homo sapiens (Human).